We begin with the raw amino-acid sequence, 297 residues long: Probable endonuclease 4 (297 aa).

Zn(2+) contacts are provided by histidine 68, histidine 109, glutamate 144, aspartate 178, histidine 181, histidine 213, aspartate 226, histidine 228, and glutamate 258.

The protein belongs to the AP endonuclease 2 family. Requires Zn(2+) as cofactor.

It catalyses the reaction Endonucleolytic cleavage to 5'-phosphooligonucleotide end-products.. Its function is as follows. Endonuclease IV plays a role in DNA repair. It cleaves phosphodiester bonds at apurinic or apyrimidinic (AP) sites, generating a 3'-hydroxyl group and a 5'-terminal sugar phosphate. In Enterococcus faecalis (strain ATCC 700802 / V583), this protein is Probable endonuclease 4.